The chain runs to 694 residues: GRB2-associated-binding protein 1 (694 aa).

An N-acetylserine modification is found at S2. The region spanning 5–116 is the PH domain; it reads EVVCSGWLRK…WVRCICDICG (112 aa). Residues 194-203 are compositionally biased toward basic and acidic residues; the sequence is PEPTRTHADS. Residues 194 to 231 form a disordered region; sequence PEPTRTHADSAKSTSSETDCNDNVPSHKNPASSQSKHG. Residues 204–230 show a composition bias toward polar residues; it reads AKSTSSETDCNDNVPSHKNPASSQSKH. Phosphoserine occurs at positions 251, 253, 266, and 304. A disordered region spans residues 309–378; that stretch reads IPPTPGNTYQ…TDSSYCIPTA (70 aa). The segment covering 358–374 has biased composition (polar residues); sequence DTCSITRTASDTDSSYC. At T387 the chain carries Phosphothreonine. A phosphoserine mark is found at S402 and S454. 2 disordered regions span residues 492 to 532 and 560 to 656; these read PAHM…VKPA and DSSR…ADER. Positions 594–611 are enriched in polar residues; that stretch reads PNLSSEDSNLFGSNSLDG. The residue at position 627 (Y627) is a Phosphotyrosine. At T638 the chain carries Phosphothreonine. S651 is modified (phosphoserine). Y659 carries the post-translational modification Phosphotyrosine. The segment at 668 to 694 is disordered; it reads LALKSTREAWTDGRQSTESETPAKNVK. Basic and acidic residues predominate over residues 672–684; that stretch reads STREAWTDGRQST. The residue at position 683 (S683) is a Phosphoserine. The span at 685–694 shows a compositional bias: polar residues; the sequence is ESETPAKNVK.

This sequence belongs to the GAB family. In terms of assembly, identified in a complex containing FRS2, GRB2, GAB1, PIK3R1 and SOS1. Forms a tripartite complex containing GAB1, METTL13 and SPRY2. Within the complex interacts with METTL13. Interacts with GRB2 and with other SH2-containing proteins. Interacts with phosphorylated LAT2. Interacts with PTPRJ. Interacts (phosphorylated) with PTPN11. Interacts with HCK. Phosphorylated in response to FGFR1 activation. Phosphorylated on tyrosine residue(s) by the epidermal growth factor receptor (EGFR) and the insulin receptor (INSR). Tyrosine phosphorylation of GAB1 mediates interaction with several proteins that contain SH2 domains. Phosphorylated on tyrosine residues by HCK upon IL6 signaling.

In terms of biological role, adapter protein that plays a role in intracellular signaling cascades triggered by activated receptor-type kinases. Plays a role in FGFR1 signaling. Probably involved in signaling by the epidermal growth factor receptor (EGFR) and the insulin receptor (INSR). Involved in the MET/HGF-signaling pathway. This Bos taurus (Bovine) protein is GRB2-associated-binding protein 1 (GAB1).